The following is a 257-amino-acid chain: Deoxyribose-phosphate aldolase (257 aa).

Residue aspartate 102 is the Proton donor/acceptor of the active site. The active-site Schiff-base intermediate with acetaldehyde is lysine 166. The active-site Proton donor/acceptor is lysine 198.

Belongs to the DeoC/FbaB aldolase family. DeoC type 2 subfamily.

It localises to the cytoplasm. The catalysed reaction is 2-deoxy-D-ribose 5-phosphate = D-glyceraldehyde 3-phosphate + acetaldehyde. It functions in the pathway carbohydrate degradation; 2-deoxy-D-ribose 1-phosphate degradation; D-glyceraldehyde 3-phosphate and acetaldehyde from 2-deoxy-alpha-D-ribose 1-phosphate: step 2/2. In terms of biological role, catalyzes a reversible aldol reaction between acetaldehyde and D-glyceraldehyde 3-phosphate to generate 2-deoxy-D-ribose 5-phosphate. In Shewanella loihica (strain ATCC BAA-1088 / PV-4), this protein is Deoxyribose-phosphate aldolase.